Here is a 264-residue protein sequence, read N- to C-terminus: Ribosomal RNA small subunit methyltransferase A (264 aa).

His-15, Leu-17, Gly-42, Glu-63, Asp-88, and Asn-109 together coordinate S-adenosyl-L-methionine.

This sequence belongs to the class I-like SAM-binding methyltransferase superfamily. rRNA adenine N(6)-methyltransferase family. RsmA subfamily.

The protein localises to the cytoplasm. The enzyme catalyses adenosine(1518)/adenosine(1519) in 16S rRNA + 4 S-adenosyl-L-methionine = N(6)-dimethyladenosine(1518)/N(6)-dimethyladenosine(1519) in 16S rRNA + 4 S-adenosyl-L-homocysteine + 4 H(+). Specifically dimethylates two adjacent adenosines (A1518 and A1519) in the loop of a conserved hairpin near the 3'-end of 16S rRNA in the 30S particle. May play a critical role in biogenesis of 30S subunits. This is Ribosomal RNA small subunit methyltransferase A from Nitrosococcus oceani (strain ATCC 19707 / BCRC 17464 / JCM 30415 / NCIMB 11848 / C-107).